Consider the following 396-residue polypeptide: S-adenosylmethionine synthase (396 aa).

Histidine 16 contributes to the ATP binding site. Aspartate 18 provides a ligand contact to Mg(2+). Glutamate 44 lines the K(+) pocket. The L-methionine site is built by glutamate 57 and glutamine 100. The tract at residues 100 to 110 is flexible loop; that stretch reads QSVDIAQGVDR. ATP is bound by residues 165–167, aspartate 240, 246–247, alanine 263, and lysine 267; these read DAK and RK. Position 240 (aspartate 240) interacts with L-methionine. Lysine 271 contributes to the L-methionine binding site.

Belongs to the AdoMet synthase family. Homotetramer; dimer of dimers. The cofactor is Mg(2+). It depends on K(+) as a cofactor.

It localises to the cytoplasm. The catalysed reaction is L-methionine + ATP + H2O = S-adenosyl-L-methionine + phosphate + diphosphate. Its pathway is amino-acid biosynthesis; S-adenosyl-L-methionine biosynthesis; S-adenosyl-L-methionine from L-methionine: step 1/1. Functionally, catalyzes the formation of S-adenosylmethionine (AdoMet) from methionine and ATP. The overall synthetic reaction is composed of two sequential steps, AdoMet formation and the subsequent tripolyphosphate hydrolysis which occurs prior to release of AdoMet from the enzyme. The protein is S-adenosylmethionine synthase of Pseudomonas savastanoi pv. phaseolicola (strain 1448A / Race 6) (Pseudomonas syringae pv. phaseolicola (strain 1448A / Race 6)).